A 320-amino-acid chain; its full sequence is Small ribosomal subunit protein uS2 (320 aa).

The interval 254–320 (GDAAKAALPV…APATTGPVSE (67 aa)) is disordered. Over residues 272-282 (VSAKNEAKSDD) the composition is skewed to basic and acidic residues. A compositionally biased stretch (low complexity) spans 308-320 (AEAAPATTGPVSE).

Belongs to the universal ribosomal protein uS2 family.

The chain is Small ribosomal subunit protein uS2 from Clavibacter sepedonicus (Clavibacter michiganensis subsp. sepedonicus).